Consider the following 1181-residue polypeptide: Putative primase (1181 aa).

The disordered stretch occupies residues 1141-1181 (RSHSTMVEHDMDDDESTNKKQELEEEDEECIDIDEYNNERF). Residues 1163-1181 (LEEEDEECIDIDEYNNERF) are compositionally biased toward acidic residues.

Belongs to the eukaryotic-type primase small subunit family.

In terms of biological role, synthesizes small RNA primers for the Okazaki fragments on both template strands at replication forks during viral DNA synthesis. This Magallana gigas (Pacific oyster) protein is Putative primase.